Consider the following 417-residue polypeptide: Serine hydroxymethyltransferase (417 aa).

(6S)-5,6,7,8-tetrahydrofolate-binding positions include leucine 121 and 125 to 127 (GHL). Lysine 229 is subject to N6-(pyridoxal phosphate)lysine. 355-357 (SPF) lines the (6S)-5,6,7,8-tetrahydrofolate pocket.

Belongs to the SHMT family. As to quaternary structure, homodimer. Pyridoxal 5'-phosphate serves as cofactor.

The protein localises to the cytoplasm. It catalyses the reaction (6R)-5,10-methylene-5,6,7,8-tetrahydrofolate + glycine + H2O = (6S)-5,6,7,8-tetrahydrofolate + L-serine. The protein operates within one-carbon metabolism; tetrahydrofolate interconversion. It functions in the pathway amino-acid biosynthesis; glycine biosynthesis; glycine from L-serine: step 1/1. Functionally, catalyzes the reversible interconversion of serine and glycine with tetrahydrofolate (THF) serving as the one-carbon carrier. This reaction serves as the major source of one-carbon groups required for the biosynthesis of purines, thymidylate, methionine, and other important biomolecules. Also exhibits THF-independent aldolase activity toward beta-hydroxyamino acids, producing glycine and aldehydes, via a retro-aldol mechanism. The protein is Serine hydroxymethyltransferase of Shewanella sp. (strain MR-4).